A 695-amino-acid chain; its full sequence is Polyribonucleotide nucleotidyltransferase (695 aa).

2 residues coordinate Mg(2+): Asp-488 and Asp-494. Positions 554–613 (PKTTIIKIKTDKIRDLIGRGGETIKGIISTSCASIDVDDSGNVNIFSNNQKSFDTAVQMV) constitute a KH domain. Positions 623-690 (NKVYTGKVVK…DRGRIKLSRK (68 aa)) constitute an S1 motif domain.

Belongs to the polyribonucleotide nucleotidyltransferase family. As to quaternary structure, component of the RNA degradosome, which is a multiprotein complex involved in RNA processing and mRNA degradation. Mg(2+) is required as a cofactor.

Its subcellular location is the cytoplasm. The catalysed reaction is RNA(n+1) + phosphate = RNA(n) + a ribonucleoside 5'-diphosphate. Functionally, involved in mRNA degradation. Catalyzes the phosphorolysis of single-stranded polyribonucleotides processively in the 3'- to 5'-direction. In Vesicomyosocius okutanii subsp. Calyptogena okutanii (strain HA), this protein is Polyribonucleotide nucleotidyltransferase.